A 447-amino-acid polypeptide reads, in one-letter code: T-box transcription factor TBX20 (447 aa).

A disordered region spans residues 62–81 (DAHGEFGGGSGSSPSSSSLC). Residues 109–288 (LWDKFHELGT…SNPFAKGFRD (180 aa)) constitute a DNA-binding region (T-box). Residues 316–340 (TYGGEEDVLGDESQTTPNRGSAFTT) form a disordered region. The span at 327 to 340 (ESQTTPNRGSAFTT) shows a compositional bias: polar residues.

Its subcellular location is the nucleus. In terms of biological role, acts as a transcriptional activator and repressor required for cardiac development and may have key roles in the maintenance of functional and structural phenotypes in adult heart. The chain is T-box transcription factor TBX20 (TBX20) from Homo sapiens (Human).